Here is a 292-residue protein sequence, read N- to C-terminus: MNNHFKCIGIVGHPRHPTALTTHEMLYRWLCKKGYEVIVEQQIAHELQLKNVKTGTLAEIGQLADLAVVVGGDGNMLGAARTLARYDIKVIGINRGNLGFLTDLDPDNAQQQLADVLEGHYISEKRFLLEAQVCQQDCQKRISTAINEVVLHPGKVAHMIEFEVYIDEIFAFSQRSDGLIISTPTGSTAYSLSAGGPILTPSLDAITLVPMFPHTLSARPLVINSSSTIRLRFSHRRNDLEISCDSQIALPIQEGEDVLIRRCDYHLNLIHPKDYSYFNTLSTKLGWSKKLF.

Aspartate 73 serves as the catalytic Proton acceptor. NAD(+)-binding positions include 73–74 (DG), 147–148 (NE), histidine 158, arginine 175, aspartate 177, 188–193 (TAYSLS), and glutamine 247.

Belongs to the NAD kinase family. A divalent metal cation serves as cofactor.

It is found in the cytoplasm. It catalyses the reaction NAD(+) + ATP = ADP + NADP(+) + H(+). Functionally, involved in the regulation of the intracellular balance of NAD and NADP, and is a key enzyme in the biosynthesis of NADP. Catalyzes specifically the phosphorylation on 2'-hydroxyl of the adenosine moiety of NAD to yield NADP. The sequence is that of NAD kinase from Shigella boydii serotype 4 (strain Sb227).